A 647-amino-acid chain; its full sequence is RalA-binding protein 1 (647 aa).

Disordered regions lie at residues 1-151 (MTEC…EKKC) and 163-186 (WKEK…APSL). Threonine 2 is modified (N-acetylthreonine). A compositionally biased stretch (polar residues) spans 24-33 (LTRTPSSEEI). 3 positions are modified to phosphoserine: serine 29, serine 30, and serine 34. A Phosphothreonine modification is found at threonine 44. Phosphoserine occurs at positions 48 and 62. The segment covering 52-68 (DILHEPPDIVSDDEKDH) has biased composition (basic and acidic residues). Position 69–74 (69–74 (GKKKGK)) interacts with ATP. Residues 69–79 (GKKKGKFKKKE) show a composition bias toward basic residues. Phosphoserine occurs at positions 92 and 93. Residues 102–118 (KMKRSKGIHVFKKPSFS) are compositionally biased toward basic residues. Residues 102–119 (KMKRSKGIHVFKKPSFSK) form a nuclear localization signal region. A compositionally biased stretch (basic and acidic residues) spans 119–151 (KKKEKDFKIKEKPKEEKHKEEKHKEEKHKEKKC). Positions 154–219 (FTAADVVKQW…PAVFRECVDY (66 aa)) are mediates association with membranes and could form transmembrane domains. The Rho-GAP domain occupies 192–380 (APFADAVERT…VLLKQVTRPL (189 aa)). A mediates interaction with RALA and RALB region spans residues 403-499 (RRQEFLLNCL…LTEQEELLAM (97 aa)). 418 to 425 (GGIKDFSK) contacts ATP. Residues serine 461 and serine 463 each carry the phosphoserine modification. The mediates interaction with REPS1 and REPS2 stretch occupies residues 500–647 (EQFLRRQIAS…PSKDRKETPI (148 aa)). Disordered stretches follow at residues 525–550 (QSRQ…DEEE) and 601–647 (EQQL…ETPI). Acidic residues predominate over residues 535 to 550 (EEYSSDSESESEDEEE). The segment covering 628 to 647 (RAAKEQAKPSPSKDRKETPI) has biased composition (basic and acidic residues). The residue at position 637 (serine 637) is a Phosphoserine.

As to quaternary structure, interacts with the GTP-bound form of RALA (via effector domain); during mitosis, recruits RALBP1 to the mitochondrion where it promotes DNM1L phosphorylation and mitochondrial fission. Interacts with DNM1L; mediates its mitotic kinase cyclin B-CDK1-mediated phosphorylation during mitosis to promote mitochondrial fission. Interacts with the mitotic kinase cyclin B-CDK1 during mitosis. Interacts with the GTP-bound form of RALB (via effector domain). Interacts with REPS1; the interaction is direct and does not affect RALA-binding nor GTPase activator activity of RALBP1. Interacts with REPS2; the interaction is direct and does not affect RALA-binding nor GTPase activator activity of RALBP1. Interacts with EPN1, NUMB and TFAP2A during interphase and mitosis. Interacts with AP2M1; as part of the AP2 complex. Interacts with CDC42. Interacts with RAC1. Tyrosine-phosphorylated upon stimulation of cells with EGF. In terms of processing, may undergo proteolytic cleavage to give peptides which reassemble to form a transporter complex. As to expression, ubiquitously expressed.

It localises to the cell membrane. It is found in the cytoplasm. The protein resides in the cytosol. The protein localises to the cytoskeleton. Its subcellular location is the spindle pole. It localises to the nucleus. It is found in the mitochondrion. It catalyses the reaction an S-substituted glutathione(in) + ATP + H2O = an S-substituted glutathione(out) + ADP + phosphate + H(+). The catalysed reaction is ATP + H2O + xenobioticSide 1 = ADP + phosphate + xenobioticSide 2.. The enzyme catalyses leukotriene C4(in) + ATP + H2O = leukotriene C4(out) + ADP + phosphate + H(+). In terms of biological role, multifunctional protein that functions as a downstream effector of RALA and RALB. As a GTPase-activating protein/GAP can inactivate CDC42 and RAC1 by stimulating their GTPase activity. As part of the Ral signaling pathway, may also regulate ligand-dependent EGF and insulin receptors-mediated endocytosis. During mitosis, may act as a scaffold protein in the phosphorylation of EPSIN/EPN1 by the mitotic kinase cyclin B-CDK1, preventing endocytosis during that phase of the cell cycle. During mitosis, also controls mitochondrial fission as an effector of RALA. Recruited to mitochondrion by RALA, acts as a scaffold to foster the mitotic kinase cyclin B-CDK1-mediated phosphorylation and activation of DNM1L. Its function is as follows. Could also function as a primary ATP-dependent active transporter for glutathione conjugates of electrophiles. May also actively catalyze the efflux of a wide range of substrates including xenobiotics like doxorubicin (DOX) contributing to cell multidrug resistance. The chain is RalA-binding protein 1 from Rattus norvegicus (Rat).